We begin with the raw amino-acid sequence, 476 residues long: mRNA-capping enzyme subunit beta (476 aa).

A disordered region spans residues 1–133; sequence MNVGSILNDE…KLKSTNKPRR (133 aa). Basic and acidic residues-rich tracts occupy residues 51 to 67 and 105 to 114; these read LKTK…EHSN and HPIEQDKSEK. Residues 123–132 show a composition bias toward basic residues; the sequence is SKLKSTNKPR.

It belongs to the fungal TPase family. Heterodimer. The mRNA-capping enzyme is composed of two separate chains alpha and beta, respectively a mRNA guanylyltransferase and an mRNA 5'-triphosphate monophosphatase. Mg(2+) is required as a cofactor.

Its subcellular location is the nucleus. The enzyme catalyses a 5'-end triphospho-ribonucleoside in mRNA + H2O = a 5'-end diphospho-ribonucleoside in mRNA + phosphate + H(+). Functionally, first step of mRNA capping. Converts the 5'-triphosphate end of a nascent mRNA chain into a diphosphate end. This chain is mRNA-capping enzyme subunit beta (CET1), found in Debaryomyces hansenii (strain ATCC 36239 / CBS 767 / BCRC 21394 / JCM 1990 / NBRC 0083 / IGC 2968) (Yeast).